Here is a 155-residue protein sequence, read N- to C-terminus: Transcriptional repressor NrdR (155 aa).

The segment at 3–34 is a zinc-finger region; it reads CPYCQNADTRVVDSRLIGEGEQVRRRRQCPSC. Positions 49–139 constitute an ATP-cone domain; the sequence is PRVVKSDGRR…VYRRFEDVGA (91 aa).

The protein belongs to the NrdR family. Zn(2+) serves as cofactor.

Its function is as follows. Negatively regulates transcription of bacterial ribonucleotide reductase nrd genes and operons by binding to NrdR-boxes. This Halorhodospira halophila (strain DSM 244 / SL1) (Ectothiorhodospira halophila (strain DSM 244 / SL1)) protein is Transcriptional repressor NrdR.